Here is a 280-residue protein sequence, read N- to C-terminus: Fasciclin-like arabinogalactan protein 3 (280 aa).

The signal sequence occupies residues 1-24 (MGLKVSSSLLCLTILLAVSSIVSA). In terms of domain architecture, FAS1 spans 25–169 (VNITRVLEKY…LSVVQISMPI (145 aa)). Residues asparagine 26, asparagine 126, and asparagine 159 are each glycosylated (N-linked (GlcNAc...) asparagine). Over residues 180–193 (VPPPPPMSSPPAPS) the composition is skewed to pro residues. Residues 180 to 262 (VPPPPPMSSP…EPPSSASNTG (83 aa)) form a disordered region. Residues 219–234 (APETAPASAPSESDSP) show a composition bias toward low complexity. Residue serine 256 is the site of GPI-anchor amidated serine attachment. Positions 257–280 (SASNTGLSFGAVLVLGFVASFVGF) are cleaved as a propeptide — removed in mature form.

Belongs to the fasciclin-like AGP family.

It localises to the cell membrane. In terms of biological role, may be a cell surface adhesion protein. This Arabidopsis thaliana (Mouse-ear cress) protein is Fasciclin-like arabinogalactan protein 3 (FLA3).